A 446-amino-acid chain; its full sequence is Glutamine synthetase (446 aa).

The 94-residue stretch at N14–G107 folds into the GS beta-grasp domain. Positions P114–I446 constitute a GS catalytic domain. Positions 138 and 140 each coordinate Mg(2+). E187 contacts ATP. Residues E192 and E199 each coordinate Mg(2+). L-glutamate contacts are provided by residues N243 to G244 and G244. Mg(2+) is bound at residue H248. S252 serves as a coordination point for ATP. L-glutamate-binding residues include R301, E307, and R319. The ATP site is built by R319, R324, and K331. A Mg(2+)-binding site is contributed by E336. R338 serves as a coordination point for L-glutamate.

It belongs to the glutamine synthetase family. Oligomer of 12 subunits arranged in the form of two hexagons. It depends on Mg(2+) as a cofactor.

It is found in the cytoplasm. It catalyses the reaction L-glutamate + NH4(+) + ATP = L-glutamine + ADP + phosphate + H(+). Its function is as follows. Probably involved in nitrogen metabolism via ammonium assimilation. Catalyzes the ATP-dependent biosynthesis of glutamine from glutamate and ammonia. In Methanococcus voltae, this protein is Glutamine synthetase.